An 88-amino-acid polypeptide reads, in one-letter code: UPF0250 protein Shal_3239 (88 aa).

It belongs to the UPF0250 family.

This is UPF0250 protein Shal_3239 from Shewanella halifaxensis (strain HAW-EB4).